The primary structure comprises 122 residues: Large ribosomal subunit protein uL14 (122 aa).

It belongs to the universal ribosomal protein uL14 family. Part of the 50S ribosomal subunit. Forms a cluster with proteins L3 and L19. In the 70S ribosome, L14 and L19 interact and together make contacts with the 16S rRNA in bridges B5 and B8.

Binds to 23S rRNA. Forms part of two intersubunit bridges in the 70S ribosome. The protein is Large ribosomal subunit protein uL14 of Acidiphilium cryptum (strain JF-5).